The following is a 205-amino-acid chain: Ribonuclease HII (205 aa).

The RNase H type-2 domain occupies 14 to 205 (ERICGIDEAG…SFKVRRLNEA (192 aa)). 3 residues coordinate a divalent metal cation: aspartate 20, glutamate 21, and aspartate 117.

This sequence belongs to the RNase HII family. It depends on Mn(2+) as a cofactor. Mg(2+) is required as a cofactor.

The protein resides in the cytoplasm. The enzyme catalyses Endonucleolytic cleavage to 5'-phosphomonoester.. Functionally, endonuclease that specifically degrades the RNA of RNA-DNA hybrids. This is Ribonuclease HII from Chlorobium phaeovibrioides (strain DSM 265 / 1930) (Prosthecochloris vibrioformis (strain DSM 265)).